We begin with the raw amino-acid sequence, 684 residues long: DNA-directed RNA polymerase subunit beta' (684 aa).

Zn(2+)-binding residues include C69, C71, C87, and C90. 3 residues coordinate Mg(2+): D489, D491, and D493.

Belongs to the RNA polymerase beta' chain family. RpoC1 subfamily. As to quaternary structure, in plastids the minimal PEP RNA polymerase catalytic core is composed of four subunits: alpha, beta, beta', and beta''. When a (nuclear-encoded) sigma factor is associated with the core the holoenzyme is formed, which can initiate transcription. The cofactor is Mg(2+). Zn(2+) serves as cofactor.

It is found in the plastid. Its subcellular location is the chloroplast. It carries out the reaction RNA(n) + a ribonucleoside 5'-triphosphate = RNA(n+1) + diphosphate. In terms of biological role, DNA-dependent RNA polymerase catalyzes the transcription of DNA into RNA using the four ribonucleoside triphosphates as substrates. This chain is DNA-directed RNA polymerase subunit beta', found in Morus indica (Mulberry).